The primary structure comprises 304 residues: Homoserine kinase (304 aa).

90-100 is an ATP binding site; that stretch reads PLARGLGSSAS.

It belongs to the GHMP kinase family. Homoserine kinase subfamily.

Its subcellular location is the cytoplasm. It catalyses the reaction L-homoserine + ATP = O-phospho-L-homoserine + ADP + H(+). Its pathway is amino-acid biosynthesis; L-threonine biosynthesis; L-threonine from L-aspartate: step 4/5. In terms of biological role, catalyzes the ATP-dependent phosphorylation of L-homoserine to L-homoserine phosphate. This chain is Homoserine kinase, found in Staphylococcus aureus (strain JH9).